Consider the following 194-residue polypeptide: Histone H1.0 (194 aa).

N-acetylmethionine is present on M1. Positions 1–11 (MTENSTSTPAA) are enriched in low complexity. A disordered region spans residues 1 to 29 (MTENSTSTPAAKPKRAKASKKSTDHPKYS). Position 2 is an N-acetylthreonine; in Histone H1.0, N-terminally processed (T2). One can recognise an H15 domain in the interval 24–97 (DHPKYSDMIV…GASGSFRLAK (74 aa)). R42 carries the citrulline modification. Positions 83-194 (QTKGVGASGS…SSAKRTGKKK (112 aa)) are disordered. S104 is subject to ADP-ribosylserine. The segment covering 105–194 (VAFKKTKKEV…SSAKRTGKKK (90 aa)) has biased composition (basic residues).

This sequence belongs to the histone H1/H5 family. Post-translationally, ADP-ribosylated on Ser-104 in response to DNA damage.

The protein localises to the nucleus. Its subcellular location is the chromosome. Functionally, histones H1 are necessary for the condensation of nucleosome chains into higher-order structures. The histones H1.0 are found in cells that are in terminal stages of differentiation or that have low rates of cell division. In Bos taurus (Bovine), this protein is Histone H1.0 (H1-0).